Consider the following 243-residue polypeptide: Carboxy-S-adenosyl-L-methionine synthase (243 aa).

S-adenosyl-L-methionine contacts are provided by residues Tyr-39, Gly-64 to Ser-66, Asp-89 to Asn-90, Asp-117 to Leu-118, Asn-132, and Arg-199.

The protein belongs to the class I-like SAM-binding methyltransferase superfamily. Cx-SAM synthase family. In terms of assembly, homodimer.

The enzyme catalyses prephenate + S-adenosyl-L-methionine = carboxy-S-adenosyl-L-methionine + 3-phenylpyruvate + H2O. In terms of biological role, catalyzes the conversion of S-adenosyl-L-methionine (SAM) to carboxy-S-adenosyl-L-methionine (Cx-SAM). This is Carboxy-S-adenosyl-L-methionine synthase from Pseudoalteromonas atlantica (strain T6c / ATCC BAA-1087).